Consider the following 315-residue polypeptide: MKNNFSHTPVLLNETIQNLDIKNDGIYIDATFGYGGHSKEILKHLGKNGKLYSIDQDPYAIKIANKLKNDTRFNIIHGKFSNILKYSNKNKIRGKVNGILLDLGMSSMQINNPNRGFSFISDGPLDMRMNPNTGIPAYMWLKKTNLTTLYHVLKKYGEEPFSKKIAYNIIAYNKKKTITRTLELSKIITNSIPIKKYRKHPARRVFQAIRIYINHEIYELQQALEHVLNILIPGGKLLILSFHSLEDRTVKKFMIKYSKPPFVPPGLAITETQLKSLANKQLKIITKIFPSTIEIRKNPRAHSAILRVAQKNNNE.

S-adenosyl-L-methionine is bound by residues 35 to 37 (GGH), Asp-55, Phe-80, Asp-102, and Gln-109.

It belongs to the methyltransferase superfamily. RsmH family.

The protein localises to the cytoplasm. It carries out the reaction cytidine(1402) in 16S rRNA + S-adenosyl-L-methionine = N(4)-methylcytidine(1402) in 16S rRNA + S-adenosyl-L-homocysteine + H(+). Its function is as follows. Specifically methylates the N4 position of cytidine in position 1402 (C1402) of 16S rRNA. This Buchnera aphidicola subsp. Baizongia pistaciae (strain Bp) protein is Ribosomal RNA small subunit methyltransferase H.